A 261-amino-acid polypeptide reads, in one-letter code: tRNA pseudouridine synthase A (261 aa).

The Nucleophile role is filled by D51. Y109 lines the substrate pocket.

This sequence belongs to the tRNA pseudouridine synthase TruA family. As to quaternary structure, homodimer.

It catalyses the reaction uridine(38/39/40) in tRNA = pseudouridine(38/39/40) in tRNA. Formation of pseudouridine at positions 38, 39 and 40 in the anticodon stem and loop of transfer RNAs. In Shewanella sp. (strain MR-4), this protein is tRNA pseudouridine synthase A.